Here is a 217-residue protein sequence, read N- to C-terminus: Ras-related protein RABA1e (217 aa).

20 to 27 provides a ligand contact to GTP; sequence GDSGVGKS. The short motif at 42 to 50 is the Effector region element; it reads SKSTIGVEF. Residues 68 to 72, 126 to 129, and 156 to 157 contribute to the GTP site; these read DTAGQ, NKAD, and SA. 2 S-geranylgeranyl cysteine lipidation sites follow: Cys214 and Cys215.

The protein belongs to the small GTPase superfamily. Rab family.

It localises to the cell membrane. Functionally, intracellular vesicle trafficking and protein transport. The protein is Ras-related protein RABA1e (RABA1E) of Arabidopsis thaliana (Mouse-ear cress).